The following is a 365-amino-acid chain: Aminomethyltransferase (365 aa).

It belongs to the GcvT family. The glycine cleavage system is composed of four proteins: P, T, L and H.

It catalyses the reaction N(6)-[(R)-S(8)-aminomethyldihydrolipoyl]-L-lysyl-[protein] + (6S)-5,6,7,8-tetrahydrofolate = N(6)-[(R)-dihydrolipoyl]-L-lysyl-[protein] + (6R)-5,10-methylene-5,6,7,8-tetrahydrofolate + NH4(+). Functionally, the glycine cleavage system catalyzes the degradation of glycine. The chain is Aminomethyltransferase from Chlorobaculum tepidum (strain ATCC 49652 / DSM 12025 / NBRC 103806 / TLS) (Chlorobium tepidum).